The following is a 350-amino-acid chain: Ion-translocating oxidoreductase complex subunit D (350 aa).

5 helical membrane passes run 15–35 (QTQT…LAQT), 36–56 (WFFG…ALGA), 67–87 (PIKP…IGLS), 88–108 (LPPL…IIIA), and 122–142 (PAMV…TSWL). Position 186 is an FMN phosphoryl threonine (T186). Helical transmembrane passes span 213-233 (WGGI…LFLL), 242-262 (IPGA…LMTP), 264-284 (ATAT…AFFI), and 299-316 (LVYG…RRFG).

This sequence belongs to the NqrB/RnfD family. In terms of assembly, the complex is composed of six subunits: RnfA, RnfB, RnfC, RnfD, RnfE and RnfG. The cofactor is FMN.

The protein resides in the cell inner membrane. Its function is as follows. Part of a membrane-bound complex that couples electron transfer with translocation of ions across the membrane. The polypeptide is Ion-translocating oxidoreductase complex subunit D (Aeromonas salmonicida (strain A449)).